We begin with the raw amino-acid sequence, 105 residues long: Heat shock protein HspQ (105 aa).

Residues 74–105 form a disordered region; sequence SSELQDERPEQPSMDELAQTIRKQRQAPRLRN. Residues 95–105 show a composition bias toward basic residues; that stretch reads RKQRQAPRLRN.

It belongs to the HspQ family.

It localises to the cytoplasm. In terms of biological role, involved in the degradation of certain denaturated proteins, including DnaA, during heat shock stress. This is Heat shock protein HspQ from Shigella dysenteriae serotype 1 (strain Sd197).